A 435-amino-acid chain; its full sequence is Probable E3 ubiquitin-protein ligase makorin-1 (435 aa).

2 consecutive C3H1-type zinc fingers follow at residues 18-45 and 48-75; these read WTKH…HDLT and KPAA…HCKP. Residues 81–109 form a disordered region; sequence LPAPQMLPLPSASLAGPSDPEPSGPTPVP. The segment covering 99-108 has biased composition (pro residues); that stretch reads DPEPSGPTPV. A C3H1-type 3 zinc finger spans residues 155–182; that stretch reads QLRKQLCPYAAVGECRYGINCAYLHGDV. The interval 183 to 210 is makorin-type Cys-His; sequence CYMCGLQVLHPTDNNQRSEHTKACIEAH. The RING-type zinc finger occupies 228–282; sequence CGVCMEVVFEKANPSERRFGILSNCSHCYCLKCIRKWRSAKQFESKIIKSCPECR. The segment at 311–340 adopts a C3H1-type 4 zinc-finger fold; the sequence is GMGSKPCRYFDEGRGTCPFGSNCFYKHAFP. Residues 345–369 form a disordered region; it reads EEAQPQRRQTGSNSRNRNSRRTPLW.

Weakly expressed in adult brain, heart and kidney.

The catalysed reaction is S-ubiquitinyl-[E2 ubiquitin-conjugating enzyme]-L-cysteine + [acceptor protein]-L-lysine = [E2 ubiquitin-conjugating enzyme]-L-cysteine + N(6)-ubiquitinyl-[acceptor protein]-L-lysine.. Its pathway is protein modification; protein ubiquitination. E3 ubiquitin ligase catalyzing the covalent attachment of ubiquitin moieties onto substrate proteins. This is Probable E3 ubiquitin-protein ligase makorin-1 from Seriola quinqueradiata (Five-ray yellowtail).